Consider the following 71-residue polypeptide: Plasticin-DA1 (71 aa).

The N-terminal stretch at Met1–Cys22 is a signal peptide. The propeptide occupies Glu23–Glu42. Residues Glu25–Arg45 are disordered. A compositionally biased stretch (acidic residues) spans Glu30–Glu40. Gly68 carries the glycine amide modification. Residues Glu70–Arg71 constitute a propeptide that is removed on maturation.

Belongs to the frog skin active peptide (FSAP) family. Plasticin subfamily. Expressed by the skin glands.

It is found in the secreted. It localises to the target cell membrane. Neutral peptide with no antimicrobial activity. Does not permeate bacterial membranes. May act in synergy with cationic peptides by enhancing their activity. Has a moderate hemolytic activity. It interacts with zwitterionic phospholipids (DMPC) without perturbing either the interface or inside of the bilayer, whereas it causes little perturbations at the interface peptide-anionic vesicles (DMPG) as well as in the bilayer alkyl chains. In Agalychnis dacnicolor (Giant Mexican leaf frog), this protein is Plasticin-DA1.